We begin with the raw amino-acid sequence, 162 residues long: Large ribosomal subunit protein uL10 (162 aa).

This sequence belongs to the universal ribosomal protein uL10 family. As to quaternary structure, part of the ribosomal stalk of the 50S ribosomal subunit. The N-terminus interacts with L11 and the large rRNA to form the base of the stalk. The C-terminus forms an elongated spine to which L12 dimers bind in a sequential fashion forming a multimeric L10(L12)X complex.

Forms part of the ribosomal stalk, playing a central role in the interaction of the ribosome with GTP-bound translation factors. The polypeptide is Large ribosomal subunit protein uL10 (Borrelia recurrentis (strain A1)).